A 316-amino-acid chain; its full sequence is BTB/POZ domain-containing protein Y57A10B.3 (316 aa).

A signal peptide spans 1–21; sequence MSAMRRCTCFIICLLTSYTYG. N-linked (GlcNAc...) asparagine glycosylation is found at Asn-91, Asn-107, Asn-118, Asn-133, Asn-191, and Asn-260. The region spanning 158–226 is the BTB domain; it reads RDAVLIVEGK…VHSTATFPND (69 aa).

The protein localises to the secreted. This is BTB/POZ domain-containing protein Y57A10B.3 (btb-14) from Caenorhabditis elegans.